Reading from the N-terminus, the 33-residue chain is Photosystem II reaction center protein Psb30 (33 aa).

Residues 8–28 (QLGSLLLITVAGPLIVFFLFI) traverse the membrane as a helical segment.

Belongs to the Psb30/Ycf12 family. PSII is composed of 1 copy each of membrane proteins PsbA, PsbB, PsbC, PsbD, PsbE, PsbF, PsbH, PsbI, PsbJ, PsbK, PsbL, PsbM, PsbT, PsbY, PsbZ, Psb30/Ycf12, peripheral proteins of the oxygen-evolving complex and a large number of cofactors. It forms dimeric complexes.

The protein localises to the plastid. The protein resides in the chloroplast thylakoid membrane. Its function is as follows. A core subunit of photosystem II (PSII), probably helps stabilize the reaction center. The chain is Photosystem II reaction center protein Psb30 from Euglena anabaena (Euglenaria anabaena).